The following is a 1298-amino-acid chain: Phosphoribosylformylglycinamidine synthase (1298 aa).

The disordered stretch occupies residues 303–327 (FPGAATGSGGEIRDEGATGRGAKPK). ATP contacts are provided by residues 305–316 (GAATGSGGEIRD), 384–386 (TGY), and alanine 676. The Mg(2+) site is built by aspartate 677, glutamate 716, asparagine 720, and aspartate 884. Serine 886 lines the ATP pocket. The Glutamine amidotransferase type-1 domain occupies 1045-1298 (VAVLREQGVN…MFRNARAWVN (254 aa)). Catalysis depends on cysteine 1138, which acts as the Nucleophile. Active-site residues include histidine 1263 and glutamate 1265.

In the N-terminal section; belongs to the FGAMS family. In terms of assembly, monomer.

It is found in the cytoplasm. It catalyses the reaction N(2)-formyl-N(1)-(5-phospho-beta-D-ribosyl)glycinamide + L-glutamine + ATP + H2O = 2-formamido-N(1)-(5-O-phospho-beta-D-ribosyl)acetamidine + L-glutamate + ADP + phosphate + H(+). It participates in purine metabolism; IMP biosynthesis via de novo pathway; 5-amino-1-(5-phospho-D-ribosyl)imidazole from N(2)-formyl-N(1)-(5-phospho-D-ribosyl)glycinamide: step 1/2. Functionally, phosphoribosylformylglycinamidine synthase involved in the purines biosynthetic pathway. Catalyzes the ATP-dependent conversion of formylglycinamide ribonucleotide (FGAR) and glutamine to yield formylglycinamidine ribonucleotide (FGAM) and glutamate. This is Phosphoribosylformylglycinamidine synthase from Pseudomonas syringae pv. syringae (strain B728a).